The chain runs to 411 residues: Adherens junction-associated protein 1 (411 aa).

Positions 1–43 (MWIQQLLGLSSMPIRWPGRSLGSHLWILIAMLQLAVDFPSCDS) are cleaved as a signal peptide. Over 44 to 283 (LGPGPEFRLL…GETSGLAVHQ (240 aa)) the chain is Extracellular. 3 stretches are compositionally biased toward low complexity: residues 62-76 (LWSL…LPTP), 121-145 (PPAA…AGAA), and 247-264 (TPVG…SNNG). Disordered regions lie at residues 62 to 156 (LWSL…RGRR) and 242 to 270 (DPWK…IQPP). Residues 284 to 304 (IITITVSLIMVIAALITTLVL) traverse the membrane as a helical segment. Positions 304–411 (LKNCCAPSGH…VSEKWFEISC (108 aa)) are targeting signals. Residues 305-411 (KNCCAPSGHT…VSEKWFEISC (107 aa)) are Cytoplasmic-facing.

As to quaternary structure, forms a complex with CDH1 and CTNNB1; interacts directly with CTNNB1. Interacts with AP1M2 and with isoform 2 of BSG/CD147.

It localises to the basolateral cell membrane. The protein resides in the apical cell membrane. The protein localises to the cell junction. Its subcellular location is the adherens junction. Plays a role in cell adhesion and cell migration. In Rattus norvegicus (Rat), this protein is Adherens junction-associated protein 1 (Ajap1).